The sequence spans 257 residues: DNA repair protein RecO (257 aa).

This sequence belongs to the RecO family.

Its function is as follows. Involved in DNA repair and RecF pathway recombination. This chain is DNA repair protein RecO, found in Variovorax paradoxus (strain S110).